Here is a 98-residue protein sequence, read N- to C-terminus: MSRNELDERIETYYVRVRGVVQGVGFRHATVREAHALKLRGWVANLEDGSVEAMIQGPGAQIDRMLAWLRHGPPAARVTEVTFEERHVERRFERFQQQ.

In terms of domain architecture, Acylphosphatase-like spans 12–98; it reads TYYVRVRGVV…ERRFERFQQQ (87 aa). Active-site residues include Arg-27 and Asn-45.

The protein belongs to the acylphosphatase family.

The catalysed reaction is an acyl phosphate + H2O = a carboxylate + phosphate + H(+). This chain is Acylphosphatase (acyP), found in Burkholderia vietnamiensis (strain G4 / LMG 22486) (Burkholderia cepacia (strain R1808)).